The sequence spans 317 residues: Ribosomal RNA small subunit methyltransferase H (317 aa).

S-adenosyl-L-methionine contacts are provided by residues 39–41, Asp-59, Phe-83, Asp-104, and Gln-111; that span reads GGH.

This sequence belongs to the methyltransferase superfamily. RsmH family.

The protein resides in the cytoplasm. It carries out the reaction cytidine(1402) in 16S rRNA + S-adenosyl-L-methionine = N(4)-methylcytidine(1402) in 16S rRNA + S-adenosyl-L-homocysteine + H(+). Specifically methylates the N4 position of cytidine in position 1402 (C1402) of 16S rRNA. The chain is Ribosomal RNA small subunit methyltransferase H from Paraburkholderia phytofirmans (strain DSM 17436 / LMG 22146 / PsJN) (Burkholderia phytofirmans).